A 209-amino-acid polypeptide reads, in one-letter code: Octanoyltransferase (209 aa).

Residues 30–209 (DNEPEIVYLV…IQTEFNKIFK (180 aa)) enclose the BPL/LPL catalytic domain. Substrate-binding positions include 69 to 76 (RGGKFTFH), 143 to 145 (AIG), and 156 to 158 (GVA). Catalysis depends on Cys-174, which acts as the Acyl-thioester intermediate.

It belongs to the LipB family.

Its subcellular location is the cytoplasm. The enzyme catalyses octanoyl-[ACP] + L-lysyl-[protein] = N(6)-octanoyl-L-lysyl-[protein] + holo-[ACP] + H(+). It participates in protein modification; protein lipoylation via endogenous pathway; protein N(6)-(lipoyl)lysine from octanoyl-[acyl-carrier-protein]: step 1/2. Functionally, catalyzes the transfer of endogenously produced octanoic acid from octanoyl-acyl-carrier-protein onto the lipoyl domains of lipoate-dependent enzymes. Lipoyl-ACP can also act as a substrate although octanoyl-ACP is likely to be the physiological substrate. This chain is Octanoyltransferase, found in Rickettsia felis (strain ATCC VR-1525 / URRWXCal2) (Rickettsia azadi).